The sequence spans 340 residues: Glycerol-3-phosphate dehydrogenase [NAD(P)+] (340 aa).

S12, W13, and K110 together coordinate NADPH. Positions 110, 141, and 143 each coordinate sn-glycerol 3-phosphate. Residue A145 participates in NADPH binding. The sn-glycerol 3-phosphate site is built by K196, D249, S259, R260, and N261. K196 functions as the Proton acceptor in the catalytic mechanism. R260 provides a ligand contact to NADPH. NADPH contacts are provided by V284 and E286.

The protein belongs to the NAD-dependent glycerol-3-phosphate dehydrogenase family.

It is found in the cytoplasm. It catalyses the reaction sn-glycerol 3-phosphate + NAD(+) = dihydroxyacetone phosphate + NADH + H(+). The enzyme catalyses sn-glycerol 3-phosphate + NADP(+) = dihydroxyacetone phosphate + NADPH + H(+). It participates in membrane lipid metabolism; glycerophospholipid metabolism. In terms of biological role, catalyzes the reduction of the glycolytic intermediate dihydroxyacetone phosphate (DHAP) to sn-glycerol 3-phosphate (G3P), the key precursor for phospholipid synthesis. The chain is Glycerol-3-phosphate dehydrogenase [NAD(P)+] from Latilactobacillus sakei subsp. sakei (strain 23K) (Lactobacillus sakei subsp. sakei).